We begin with the raw amino-acid sequence, 209 residues long: uncharacterized protein (209 aa).

Positions 1–167 (MRNSAGLFMI…LNTYASSNYG (167 aa)) constitute a Nudix hydrolase domain.

This is an uncharacterized protein from Orgyia pseudotsugata (Douglas-fir tussock moth).